The sequence spans 114 residues: Phosphoribosyl-ATP pyrophosphatase (114 aa).

It belongs to the PRA-PH family.

It localises to the cytoplasm. The enzyme catalyses 1-(5-phospho-beta-D-ribosyl)-ATP + H2O = 1-(5-phospho-beta-D-ribosyl)-5'-AMP + diphosphate + H(+). The protein operates within amino-acid biosynthesis; L-histidine biosynthesis; L-histidine from 5-phospho-alpha-D-ribose 1-diphosphate: step 2/9. The sequence is that of Phosphoribosyl-ATP pyrophosphatase from Leuconostoc mesenteroides subsp. mesenteroides (strain ATCC 8293 / DSM 20343 / BCRC 11652 / CCM 1803 / JCM 6124 / NCDO 523 / NBRC 100496 / NCIMB 8023 / NCTC 12954 / NRRL B-1118 / 37Y).